A 69-amino-acid polypeptide reads, in one-letter code: ATP synthase protein 8 (69 aa).

The helical transmembrane segment at 8–24 (TWTLTISLMIISLFCIY) threads the bilayer. Position 55 is an N6-acetyllysine; alternate (lysine 55). N6-succinyllysine; alternate is present on lysine 55. An N6-acetyllysine modification is found at lysine 58.

The protein belongs to the ATPase protein 8 family. In terms of assembly, F-type ATPases have 2 components, CF(1) - the catalytic core - and CF(0) - the membrane proton channel. Component of an ATP synthase complex composed of ATP5PB, ATP5MC1, ATP5F1E, ATP5PD, ATP5ME, ATP5PF, ATP5MF, MT-ATP6, MT-ATP8, ATP5F1A, ATP5F1B, ATP5F1D, ATP5F1C, ATP5PO, ATP5MG, ATP5MK and ATP5MJ. Interacts with PRICKLE3.

Its subcellular location is the mitochondrion membrane. In terms of biological role, mitochondrial membrane ATP synthase (F(1)F(0) ATP synthase or Complex V) produces ATP from ADP in the presence of a proton gradient across the membrane which is generated by electron transport complexes of the respiratory chain. F-type ATPases consist of two structural domains, F(1) - containing the extramembraneous catalytic core and F(0) - containing the membrane proton channel, linked together by a central stalk and a peripheral stalk. During catalysis, ATP synthesis in the catalytic domain of F(1) is coupled via a rotary mechanism of the central stalk subunits to proton translocation. Part of the complex F(0) domain. Minor subunit located with subunit a in the membrane. The protein is ATP synthase protein 8 (MT-ATP8) of Didelphis virginiana (North American opossum).